Reading from the N-terminus, the 105-residue chain is DNA-directed RNA polymerase RPB9 homolog (105 aa).

Cys-4, Cys-7, Cys-24, Cys-26, Cys-73, Cys-76, and Cys-96 together coordinate Zn(2+). The C4-type; atypical zinc finger occupies 4–26 (CKACSSCMVRTYVDGNIIFRCSC).

Belongs to the Asfivirus DNA-directed RNA polymerase RPB9 homolog family. As to quaternary structure, part of the viral DNA-directed RNA polymerase that consists of 8 polII-like subunits (RPB1, RPB2, RPB3, RPB5, RPB6, RPB7, RPB9, RPB10), a capping enzyme and a termination factor.

The protein resides in the host cytoplasm. Its function is as follows. Component of the DNA-directed RNA polymerase (RNAP) that catalyzes the transcription in the cytoplasm of viral DNA into RNA using the four ribonucleoside triphosphates as substrates. This chain is DNA-directed RNA polymerase RPB9 homolog, found in African swine fever virus (isolate Pig/Kenya/KEN-50/1950) (ASFV).